The following is a 482-amino-acid chain: Cardiolipin synthase (482 aa).

2 helical membrane-spanning segments follow: residues 4 to 24 (LAYL…VTVF) and 34 to 54 (WAWL…YLIF). PLD phosphodiesterase domains are found at residues 217-244 (LNYR…GDEY) and 395-422 (DNGF…DFRS). Catalysis depends on residues histidine 222, lysine 224, aspartate 229, histidine 400, lysine 402, and aspartate 407.

It belongs to the phospholipase D family. Cardiolipin synthase subfamily.

It localises to the cell membrane. It carries out the reaction 2 a 1,2-diacyl-sn-glycero-3-phospho-(1'-sn-glycerol) = a cardiolipin + glycerol. In terms of biological role, catalyzes the reversible phosphatidyl group transfer from one phosphatidylglycerol molecule to another to form cardiolipin (CL) (diphosphatidylglycerol) and glycerol. The protein is Cardiolipin synthase (cls) of Listeria welshimeri serovar 6b (strain ATCC 35897 / DSM 20650 / CCUG 15529 / CIP 8149 / NCTC 11857 / SLCC 5334 / V8).